The following is a 60-amino-acid chain: DNA-directed RNA polymerase subunit Rpo6 (60 aa).

This sequence belongs to the archaeal Rpo6/eukaryotic RPB6 RNA polymerase subunit family. Part of the RNA polymerase complex.

It localises to the cytoplasm. It catalyses the reaction RNA(n) + a ribonucleoside 5'-triphosphate = RNA(n+1) + diphosphate. Its function is as follows. DNA-dependent RNA polymerase (RNAP) catalyzes the transcription of DNA into RNA using the four ribonucleoside triphosphates as substrates. In Methanothrix thermoacetophila (strain DSM 6194 / JCM 14653 / NBRC 101360 / PT) (Methanosaeta thermophila), this protein is DNA-directed RNA polymerase subunit Rpo6.